Here is a 535-residue protein sequence, read N- to C-terminus: CTP synthase (535 aa).

The segment at 1–267 (MTKYIFVTGG…DKLVCEHMKL (267 aa)) is amidoligase domain. S13 provides a ligand contact to CTP. Residue S13 participates in UTP binding. 14–19 (SLGKGI) provides a ligand contact to ATP. Y54 is a binding site for L-glutamine. D71 contacts ATP. The Mg(2+) site is built by D71 and E141. CTP contacts are provided by residues 148 to 150 (DIE), 188 to 193 (KTKPTQ), and K224. UTP contacts are provided by residues 188 to 193 (KTKPTQ) and K224. Residues 292–534 (TIGLVGKYVE…VGASLQASES (243 aa)) form the Glutamine amidotransferase type-1 domain. G354 is an L-glutamine binding site. Catalysis depends on C381, which acts as the Nucleophile; for glutamine hydrolysis. Residues 382–385 (LGMQ), E405, and R462 contribute to the L-glutamine site. Catalysis depends on residues H507 and E509.

This sequence belongs to the CTP synthase family. In terms of assembly, homotetramer.

The enzyme catalyses UTP + L-glutamine + ATP + H2O = CTP + L-glutamate + ADP + phosphate + 2 H(+). The catalysed reaction is L-glutamine + H2O = L-glutamate + NH4(+). It carries out the reaction UTP + NH4(+) + ATP = CTP + ADP + phosphate + 2 H(+). The protein operates within pyrimidine metabolism; CTP biosynthesis via de novo pathway; CTP from UDP: step 2/2. With respect to regulation, allosterically activated by GTP, when glutamine is the substrate; GTP has no effect on the reaction when ammonia is the substrate. The allosteric effector GTP functions by stabilizing the protein conformation that binds the tetrahedral intermediate(s) formed during glutamine hydrolysis. Inhibited by the product CTP, via allosteric rather than competitive inhibition. Functionally, catalyzes the ATP-dependent amination of UTP to CTP with either L-glutamine or ammonia as the source of nitrogen. Regulates intracellular CTP levels through interactions with the four ribonucleotide triphosphates. The protein is CTP synthase of Bacillus pumilus (strain SAFR-032).